The primary structure comprises 139 residues: Protein spalt-accessory (139 aa).

A signal peptide spans 1–16 (MKLLIALLALVTAAIA). A compositionally biased stretch (gly residues) spans 60 to 75 (GIGQGGVHPGQGGFAG). The tract at residues 60 to 139 (GIGQGGVHPG…HHEHHGHHRH (80 aa)) is disordered. A compositionally biased stretch (basic and acidic residues) spans 109 to 121 (NPHEYPEHHGEHH). Residues 122–139 (REHHEHHGHHEHHGHHRH) show a composition bias toward basic residues.

The protein localises to the secreted. In terms of biological role, likely to be involved in the establishment of the head. The protein is Protein spalt-accessory (sala) of Drosophila simulans (Fruit fly).